Reading from the N-terminus, the 303-residue chain is MDLKGLLHEENELPSIEKRKIDENAVEHDKVERKRTKSVAVPKIEMNFLNKPIVPDTTKVISNFLTHYLITEPVEHVEIEAKLGTLIDLETQNRFEFPVMNETILNPEFNLRTRFESDMTASEHKYLNEFLNQAFRDSQKPGRLPFAYKHTKQVDLFYETEDNSRDKIRVSKNQSDNQVLACVKKRRVADLFLYCPNDAFDIRISISDELPVSMPSGNQQPSLTRLKDRVGYVHQEIKIDLTKTTQNDPVYDTTERHELEVEFGNIADLRDRAQKAKDGMEAPLFRRVQLFMDNVRILRREHS.

Belongs to the fungal TPase family. Heterodimer. The mRNA-capping enzyme is composed of two separate chains alpha and beta, respectively a mRNA guanylyltransferase and an mRNA 5'-triphosphate monophosphatase. Requires Mg(2+) as cofactor.

The protein resides in the nucleus. The catalysed reaction is a 5'-end triphospho-ribonucleoside in mRNA + H2O = a 5'-end diphospho-ribonucleoside in mRNA + phosphate + H(+). Functionally, first step of mRNA capping. Converts the 5'-triphosphate end of a nascent mRNA chain into a diphosphate end. This is mRNA-capping enzyme subunit beta (pct1) from Schizosaccharomyces pombe (strain 972 / ATCC 24843) (Fission yeast).